The primary structure comprises 345 residues: Trace amine-associated receptor 6 (345 aa).

Residues 1–32 are Extracellular-facing; sequence MSSNSSLLVAVQLCYPNVNGSCVETLYSPGSR. 2 N-linked (GlcNAc...) asparagine glycosylation sites follow: N4 and N19. Intrachain disulfides connect C22-C186 and C105-C190. A helical transmembrane segment spans residues 33–53; it reads VILYIVFGFGAVLAVFGNLLV. Over 54–68 the chain is Cytoplasmic; it reads MISILHFKQLHSPTN. The chain crosses the membrane as a helical span at residues 69-89; it reads FLVASLACADFLVGVTVMPFS. The Extracellular segment spans residues 90–107; the sequence is MVRTVESCWYFGRSFCTF. A helical transmembrane segment spans residues 108-128; the sequence is HTCCDVAFCYSSLFHLCFISI. Topologically, residues 129–147 are cytoplasmic; that stretch reads DRYIAVTDPLVYPTKFTVS. The chain crosses the membrane as a helical span at residues 148-168; that stretch reads VSGICISVSWILPLMYSGAVF. Residues 169-202 are Extracellular-facing; the sequence is YTGVYDDGLEELSDALNCIGGCQTVVNQNWVLID. The helical transmembrane segment at 203-223 threads the bilayer; the sequence is CLSFFIPTFIMIILYGNIFLV. At 224 to 259 the chain is on the cytoplasmic side; sequence ARRQAKKIENTGSKTESSSESYKARVARRERKAAKT. The helical transmembrane segment at 260–276 threads the bilayer; sequence LGVTVVAFMISWLPYSI. Residues 277 to 282 lie on the Extracellular side of the membrane; that stretch reads DSLIDA. A helical transmembrane segment spans residues 283–302; sequence FMGFITPAYIYEICCWCAYY. The Cytoplasmic segment spans residues 303–345; that stretch reads NSAMNPLIYALFYPWFRKAIKVIVTGQVLKNSSATMNLFSEHI.

Belongs to the G-protein coupled receptor 1 family.

It localises to the cell membrane. Olfactory receptor specific for trace amines, such as beta-phenylethylamine (beta-PEA). Trace amine compounds are enriched in animal body fluids and act on trace amine-associated receptors (TAARs) to elicit both intraspecific and interspecific innate behaviors. Beta-PEA-binding causes a conformation change that triggers signaling via G(s)-class of G alpha proteins (GNAL or GNAS). This is Trace amine-associated receptor 6 (TAAR6) from Pan troglodytes (Chimpanzee).